The primary structure comprises 513 residues: PTADAIAAKKMENGKAAIDFPDQSVIRRVSSADRISLQDIARERVDVICDRMHRLPDEFLDELKNGLRAILEGGNGSQHRDEFFILQKLVQSRSDLTAKTLIRAHRVQLEILVSINTGIQGFLHPSISLSQTSLIEIFLYKRCRNIACQNQLPADECSXDTCTNNNGFCNLCMCVICSKFDFEVNTCRWIGCDLXSHWTHTDCAIREQLICMGPSVKSGSGPSEMVFRCQACSXTSXLLGWVKDVFQHCAPSWDGDALIRELDFVSRIFHGSKDQRGMNLFWKCDDLKEKLKSRKMDSKAACRAILMVFQELDLDNSKSLENAESGRLIAPQEACNRIAEVVQEAIRKMEFVADEKMRMFKKARIAVEACDRELADKAREAGDLKVERQKKKSQIEELERIVRLKNAEADMFQLKANEAKREAERLQRIALAKSDKSEEEYTSNYLKQKLSEAEAEKQYLYEKIKLQESSRLSQSSGDPSSMLMYSKIHDLLYNGPPKADSQSNDCHPFRTNP.

The PHD-type zinc-finger motif lies at 166 to 235 (NGFCNLCMCV…VFRCQACSXT (70 aa)). Residues 372–469 (RELADKAREA…LYEKIKLQES (98 aa)) are a coiled coil. Residues 493–513 (YNGPPKADSQSNDCHPFRTNP) form a disordered region. The span at 500–513 (DSQSNDCHPFRTNP) shows a compositional bias: polar residues.

In terms of assembly, self-interacts and probably forms heteromers. Binds to VPg of pea seed borne mosaic virus (PSbMV), turnip mosaic virus (TuMV) and lettuce mosaic virus (LMV), but not with VPg of tobacco etch virus (TEV), cowpea mosaic virus (CPMV), tomato black ring virus (TBRV) and grapevine fan leaf virus (GFLV).

It is found in the nucleus. In terms of biological role, required for the maintenance and/or establishment of both the shoot and root meristems, probably by controlling the expression of the meristem genes and of genes required for auxin responses. Involved in the development of the basal pole and in auxin-mediated root and vascular development in the embryo. Confers sensitivity to turnip mosaic virus (TuMV) probably by promoting viral movement and multiplication via interaction with TuMV VPg. The sequence is that of OBERON-like protein (PVIP) from Pisum sativum (Garden pea).